The chain runs to 399 residues: P2X purinoceptor 1 (399 aa).

The Cytoplasmic portion of the chain corresponds to 1–28 (MARRLQDELSAFFFEYDTPRMVLVRNKK). The helical transmembrane segment at 29-50 (VGVIFRLIQLVVLVYVIGWVFV) threads the bilayer. At 51–338 (YEKGYQTSSG…IPTMTTIGSG (288 aa)) the chain is on the extracellular side. CTP contacts are provided by Lys-68, Lys-70, and Lys-140. Lys-70 serves as a coordination point for ATP. 3 disulfide bridges follow: Cys-117-Cys-165, Cys-126-Cys-149, and Cys-132-Cys-159. Residues Asn-153 and Asn-184 are each glycosylated (N-linked (GlcNAc...) asparagine). Residue Thr-186 coordinates CTP. Thr-186 is a binding site for ATP. A glycan (N-linked (GlcNAc...) asparagine) is linked at Asn-210. Disulfide bonds link Cys-217–Cys-227 and Cys-261–Cys-270. ATP-binding residues include Ser-286, Asn-290, and Arg-292. Positions 290 and 292 each coordinate CTP. Asn-300 carries N-linked (GlcNAc...) asparagine glycosylation. Lys-309 lines the CTP pocket. Lys-309 is an ATP binding site. Residues 331–338 (TMTTIGSG) form a pore-forming motif region. A helical transmembrane segment spans residues 339-358 (IGIFGVATVLCDLLLLHILP). The Cytoplasmic segment spans residues 359–399 (KRHYYKQKKFKYAEDMGPGEGERDPAATSSTLGLQENMRTS). The segment at 374-399 (MGPGEGERDPAATSSTLGLQENMRTS) is disordered. Residues 385–399 (ATSSTLGLQENMRTS) show a composition bias toward polar residues. A phosphoserine mark is found at Ser-387 and Ser-388. Thr-389 is modified (phosphothreonine).

Belongs to the P2X receptor family. Functional P2XRs are organized as homomeric and heteromeric trimers. Forms heterodimer with P2RX2. Forms heterodimer with P2RX4. Forms heterodimer with P2RX5. As to expression, expressed in smooth muscle of the bladder and arteries.

The protein localises to the cell membrane. The enzyme catalyses Ca(2+)(in) = Ca(2+)(out). It carries out the reaction K(+)(in) = K(+)(out). It catalyses the reaction Na(+)(in) = Na(+)(out). Its activity is regulated as follows. Activated by low concentrations of ATP (&lt;1 uM). Undergoes rapid desensitisation. Sensitives to the ATP agonist:alpha/beta-methylene-ATP. Modulated by cholesterol. Functionally, ATP-gated nonselective transmembrane cation channel permeable to potassium, sodium and with relatively high calcium permeability. Furthermore, CTP functions as a weak affinity agonist for P2RX1. Plays a role in male fertility, bladder contraction and platelet aggregation. Specifically, plays an important role in neurogenic contraction of smooth muscle of the vas deferens, and therefore is essential for normal male reproductive function. In addition, contributes to smooth muscle contractions of the urinary bladder. On platelets, contributes to platelet activation and aggregation and thereby, also to thrombosis. On neutrophils, it is involved in chemotaxis and in mitigating the activation of circulating cells. The polypeptide is P2X purinoceptor 1 (P2rx1) (Mus musculus (Mouse)).